The sequence spans 355 residues: Peptide chain release factor 1 (355 aa).

Glutamine 229 carries the post-translational modification N5-methylglutamine. Positions 280–299 are disordered; the sequence is LDRERSAARKGQVGSGDRSE.

Belongs to the prokaryotic/mitochondrial release factor family. In terms of processing, methylated by PrmC. Methylation increases the termination efficiency of RF1.

It is found in the cytoplasm. Peptide chain release factor 1 directs the termination of translation in response to the peptide chain termination codons UAG and UAA. The protein is Peptide chain release factor 1 of Parvibaculum lavamentivorans (strain DS-1 / DSM 13023 / NCIMB 13966).